The primary structure comprises 363 residues: Sulfate/thiosulfate import ATP-binding protein CysA (363 aa).

Residues 3 to 237 (IEINNISKYF…PATRFVLEFL (235 aa)) enclose the ABC transporter domain. 35 to 42 (GPSGSGKT) lines the ATP pocket.

This sequence belongs to the ABC transporter superfamily. Sulfate/tungstate importer (TC 3.A.1.6) family. In terms of assembly, the complex is composed of two ATP-binding proteins (CysA), two transmembrane proteins (CysT and CysW) and a solute-binding protein (CysP).

It localises to the cell inner membrane. The catalysed reaction is sulfate(out) + ATP + H2O = sulfate(in) + ADP + phosphate + H(+). The enzyme catalyses thiosulfate(out) + ATP + H2O = thiosulfate(in) + ADP + phosphate + H(+). Functionally, part of the ABC transporter complex CysAWTP involved in sulfate/thiosulfate import. Responsible for energy coupling to the transport system. This is Sulfate/thiosulfate import ATP-binding protein CysA from Yersinia pestis.